Reading from the N-terminus, the 226-residue chain is Gap junction beta-2 protein (226 aa).

An intramembrane segment occupies 2-13; that stretch reads DWGTLQTILGGV. The Cytoplasmic portion of the chain corresponds to 14-20; sequence NKHSTSI. The chain crosses the membrane as a helical span at residues 21-40; the sequence is GKIWLTVLFIFRIMILVVAA. At 41–73 the chain is on the extracellular side; it reads KEVWGDEQADFVCNTLQPGCKNVCYDHYFPISH. Ca(2+)-binding residues include Glu-42, Gly-45, and Glu-47. Disulfide bonds link Cys-53-Cys-180, Cys-60-Cys-174, and Cys-64-Cys-169. The chain crosses the membrane as a helical span at residues 74–94; it reads IRLWALQLIFVSTPALLVAMH. The Cytoplasmic portion of the chain corresponds to 95-135; sequence VAYRRHEKKRKFIKGEIKSEFKDIEEIKTQKVRIEGSLWWT. Residues 136 to 156 form a helical membrane-spanning segment; that stretch reads YTSSIFFRVIFEAAFMYVFYV. Over 157 to 189 the chain is Extracellular; the sequence is MYDGFSMQRLVKCNAWPCPNTVDCFVSRPTEKT. The helical transmembrane segment at 190-210 threads the bilayer; the sequence is VFTVFMIAVSGICILLNVTEL. At 211–226 the chain is on the cytoplasmic side; sequence CYLLIRYCSGKSKKPV.

Belongs to the connexin family. Beta-type (group I) subfamily. In terms of assembly, a hemichannel or connexon is composed of a hexamer of connexins. A functional gap junction is formed by the apposition of two hemichannels. Forms heteromeric channels with GJB4. Interacts with CNST.

It is found in the cell membrane. The protein localises to the cell junction. Its subcellular location is the gap junction. Functionally, structural component of gap junctions. Gap junctions are dodecameric channels that connect the cytoplasm of adjoining cells. They are formed by the docking of two hexameric hemichannels, one from each cell membrane. Small molecules and ions diffuse from one cell to a neighboring cell via the central pore. The protein is Gap junction beta-2 protein (GJB2) of Gorilla gorilla gorilla (Western lowland gorilla).